Here is a 483-residue protein sequence, read N- to C-terminus: Regulatory protein ViaA (483 aa).

This sequence belongs to the ViaA family. Homodimer. Interacts with RavA.

The protein resides in the cytoplasm. Its function is as follows. Component of the RavA-ViaA chaperone complex, which may act on the membrane to optimize the function of some of the respiratory chains. ViaA stimulates the ATPase activity of RavA. This is Regulatory protein ViaA from Escherichia fergusonii (strain ATCC 35469 / DSM 13698 / CCUG 18766 / IAM 14443 / JCM 21226 / LMG 7866 / NBRC 102419 / NCTC 12128 / CDC 0568-73).